We begin with the raw amino-acid sequence, 640 residues long: DNA mismatch repair protein MutL (640 aa).

Positions T343 to P389 are disordered. Residues Q350–H373 show a composition bias toward basic and acidic residues.

This sequence belongs to the DNA mismatch repair MutL/HexB family.

Its function is as follows. This protein is involved in the repair of mismatches in DNA. It is required for dam-dependent methyl-directed DNA mismatch repair. May act as a 'molecular matchmaker', a protein that promotes the formation of a stable complex between two or more DNA-binding proteins in an ATP-dependent manner without itself being part of a final effector complex. This Desulforamulus reducens (strain ATCC BAA-1160 / DSM 100696 / MI-1) (Desulfotomaculum reducens) protein is DNA mismatch repair protein MutL.